The following is a 421-amino-acid chain: Tyrosine--tRNA ligase (421 aa).

Tyrosine 42 provides a ligand contact to L-tyrosine. A 'HIGH' region motif is present at residues cysteine 47–serine 56. 2 residues coordinate L-tyrosine: tyrosine 179 and glutamine 183. The short motif at lysine 239 to threonine 243 is the 'KMSKS' region element. Residue lysine 242 participates in ATP binding. The 66-residue stretch at leucine 354 to alanine 419 folds into the S4 RNA-binding domain.

This sequence belongs to the class-I aminoacyl-tRNA synthetase family. TyrS type 1 subfamily. In terms of assembly, homodimer.

Its subcellular location is the cytoplasm. It catalyses the reaction tRNA(Tyr) + L-tyrosine + ATP = L-tyrosyl-tRNA(Tyr) + AMP + diphosphate + H(+). Catalyzes the attachment of tyrosine to tRNA(Tyr) in a two-step reaction: tyrosine is first activated by ATP to form Tyr-AMP and then transferred to the acceptor end of tRNA(Tyr). The chain is Tyrosine--tRNA ligase from Beijerinckia indica subsp. indica (strain ATCC 9039 / DSM 1715 / NCIMB 8712).